The sequence spans 292 residues: Elongation factor Ts (292 aa).

The segment at Thr79–Val82 is involved in Mg(2+) ion dislocation from EF-Tu.

Belongs to the EF-Ts family.

The protein localises to the cytoplasm. In terms of biological role, associates with the EF-Tu.GDP complex and induces the exchange of GDP to GTP. It remains bound to the aminoacyl-tRNA.EF-Tu.GTP complex up to the GTP hydrolysis stage on the ribosome. The chain is Elongation factor Ts from Malacoplasma penetrans (strain HF-2) (Mycoplasma penetrans).